Consider the following 378-residue polypeptide: Peptide chain release factor RF2 (378 aa).

Q253 carries the N5-methylglutamine modification.

It belongs to the prokaryotic/mitochondrial release factor family. In terms of assembly, interacts with the ribosome. Interacts with ribosomal protein L11. Recruited to stalled E.coli ribosomes by E.coli ArfA.

It localises to the cytoplasm. Peptide chain release factor 2 directs the termination of translation in response to the peptide chain termination codons UGA and UAA. In endogenous ribosomes interacts with P-site tRNA and 23S rRNA. In the presence of truncated mRNA in the 70S ribosome, ArfA and RF2 interact such that the GGQ peptide hydrolysis motif of RF2 rises into the peptidyl-transferase center and releases the ribosome. Recruited to stalled E.coli 70S ribosomes by E.coli ArfA, but cannot be functionally accomodated in the peptidyl-transferase center. Note T.thermophilus probably does not encode arfA. The polypeptide is Peptide chain release factor RF2 (prfB) (Thermus thermophilus (strain ATCC 27634 / DSM 579 / HB8)).